Reading from the N-terminus, the 887-residue chain is MARQGCLGSFQVISLFTFAISVNICLGFTASRIKRAEWDEGPPTVLSDSPWTNTSGSCKGRCFELQEVGPPDCRCDNLCKSYSSCCHDFDELCLKTARGWECTKDRCGEVRNEENACHCSEDCLSRGDCCTNYQVVCKGESHWVDDDCEEIKVPECPAGFVRPPLIIFSVDGFRASYMKKGSKVMPNIEKLRSCGTHAPYMRPVYPTKTFPNLYTLATGLYPESHGIVGNSMYDPVFDASFHLRGREKFNHRWWGGQPLWITATKQGVRAGTFFWSVSIPHERRILTILQWLSLPDNERPSVYAFYSEQPDFSGHKYGPFGPEMTNPLREIDKTVGQLMDGLKQLRLHRCVNVIFVGDHGMEDVTCDRTEFLSNYLTNVDDITLVPGTLGRIRAKSINNSKYDPKTIIANLTCKKPDQHFKPYMKQHLPKRLHYANNRRIEDIHLLVDRRWHVARKPLDVYKKPSGKCFFQGDHGFDNKVNSMQTVFVGYGPTFKYRTKVPPFENIELYNVMCDLLGLKPAPNNGTHGSLNHLLRTNTFRPTMPDEVSRPNYPGIMYLQSEFDLGCTCDDKVEPKNKLEELNKRLHTKGSTEAETGKFRGSKHENKKNLNGSVEPRKERHLLYGRPAVLYRTSYDILYHTDFESGYSEIFLMPLWTSYTISKQAEVSSIPEHLTNCVRPDVRVSPGFSQNCLAYKNDKQMSYGFLFPPYLSSSPEAKYDAFLVTNMVPMYPAFKRVWAYFQRVLVKKYASERNGVNVISGPIFDYNYDGLRDTEDEIKQYVEGSSIPVPTHYYSIITSCLDFTQPADKCDGPLSVSSFILPHRPDNDESCNSSEDESKWVEELMKMHTARVRDIEHLTGLDFYRKTSRSYSEILTLKTYLHTYESEI.

Positions 1 to 27 (MARQGCLGSFQVISLFTFAISVNICLG) are cleaved as a signal peptide. A propeptide spans 28-35 (FTASRIKR) (removed by furin). Asparagine 53 carries N-linked (GlcNAc...) asparagine glycosylation. SMB domains follow at residues 54-97 (TSGS…LKTA) and 98-142 (RGWE…GESH). 10 disulfides stabilise this stretch: cysteine 58–cysteine 75, cysteine 62–cysteine 93, cysteine 73–cysteine 86, cysteine 79–cysteine 85, cysteine 102–cysteine 119, cysteine 107–cysteine 137, cysteine 117–cysteine 130, cysteine 123–cysteine 129, cysteine 148–cysteine 194, and cysteine 156–cysteine 350. Positions 126–128 (RGD) match the Cell attachment site motif. The tract at residues 144–501 (VDDDCEEIKV…PTFKYRTKVP (358 aa)) is phosphodiesterase. Zn(2+)-binding residues include aspartate 171 and threonine 209. Threonine 209 (nucleophile) is an active-site residue. 1-(9Z-octadecenoyl)-sn-glycero-3-phosphate is bound by residues threonine 209, asparagine 230, and aspartate 311. 3 residues coordinate 1-hexadecanoyl-sn-glycero-3-phosphate: threonine 209, asparagine 230, and aspartate 311. 1-tetradecanoyl-sn-glycerol 3-phosphate is bound by residues threonine 209, asparagine 230, and aspartate 311. The Zn(2+) site is built by aspartate 311, histidine 315, aspartate 358, and histidine 359. 5 disulfide bridges follow: cysteine 366/cysteine 468, cysteine 413/cysteine 830, cysteine 566/cysteine 691, cysteine 568/cysteine 676, and cysteine 799/cysteine 809. 2 N-linked (GlcNAc...) asparagine glycosylation sites follow: asparagine 398 and asparagine 410. Histidine 474 is a binding site for Zn(2+). Residue histidine 474 participates in 1-(9Z-octadecenoyl)-sn-glycero-3-phosphate binding. Residue histidine 474 participates in 1-hexadecanoyl-sn-glycero-3-phosphate binding. Residue histidine 474 participates in 1-tetradecanoyl-sn-glycerol 3-phosphate binding. The N-linked (GlcNAc...) asparagine glycan is linked to asparagine 524. The span at 586–607 (HTKGSTEAETGKFRGSKHENKK) shows a compositional bias: basic and acidic residues. Positions 586–615 (HTKGSTEAETGKFRGSKHENKKNLNGSVEP) are disordered. A glycan (N-linked (GlcNAc...) asparagine) is linked at asparagine 610. Residues 622–887 (LYGRPAVLYR…TYLHTYESEI (266 aa)) are nuclease-like domain. Ca(2+) is bound by residues aspartate 764, asparagine 766, aspartate 768, leucine 770, and aspartate 772. N-linked (GlcNAc...) asparagine glycosylation is present at asparagine 831. Residues 854–875 (IEHLTGLDFYRKTSRSYSEILT) form a required for secretion region.

The protein belongs to the nucleotide pyrophosphatase/phosphodiesterase family. Zn(2+) is required as a cofactor. The cofactor is Ca(2+). N-glycosylation, but not furin-cleavage, plays a critical role on secretion and on lysoPLD activity. In terms of processing, the interdomain disulfide bond between Cys-413 and Cys-830 is essential for catalytic activity. Abundantly expressed in cerebrum and cerebellum. Localized in secretory epithelial cells in the brain and the eye including choroid plexus epithelial cells, ciliary epithelial cells, iris pigment epithelial cells, and retinal pigment cells.

The protein resides in the secreted. It carries out the reaction a 1-O-alkyl-sn-glycero-3-phosphoethanolamine + H2O = a 1-O-alkyl-sn-glycero-3-phosphate + ethanolamine + H(+). The enzyme catalyses a 1-acyl-sn-glycero-3-phosphoethanolamine + H2O = a 1-acyl-sn-glycero-3-phosphate + ethanolamine + H(+). The catalysed reaction is 1-(9Z-octadecenoyl)-sn-glycero-3-phosphoethanolamine + H2O = 1-(9Z-octadecenoyl)-sn-glycero-3-phosphate + ethanolamine + H(+). It catalyses the reaction a 1-O-alkyl-sn-glycero-3-phosphocholine + H2O = a 1-O-alkyl-sn-glycero-3-phosphate + choline + H(+). It carries out the reaction 1-O-(9Z-octadecenyl)-sn-glycero-3-phosphocholine + H2O = 1-O-(9Z-octadecenyl)-sn-glycero-3-phosphate + choline + H(+). The enzyme catalyses 1-O-hexadecyl-sn-glycero-3-phosphocholine + H2O = 1-O-hexadecyl-sn-glycero-3-phosphate + choline + H(+). The catalysed reaction is a 1-O-(1Z-alkenyl)-sn-glycero-3-phosphocholine + H2O = a 1-O-(1Z-alkenyl)-sn-glycero-3-phosphate + choline + H(+). It catalyses the reaction a 1-acyl-sn-glycero-3-phosphocholine + H2O = a 1-acyl-sn-glycero-3-phosphate + choline + H(+). It carries out the reaction 1-dodecanoyl-sn-glycero-3-phosphocholine + H2O = 1-dodecanoyl-sn-glycerol 3-phosphate + choline + H(+). The enzyme catalyses 1-(9Z-octadecenoyl)-sn-glycero-3-phosphocholine + H2O = 1-(9Z-octadecenoyl)-sn-glycero-3-phosphate + choline + H(+). The catalysed reaction is 1-tetradecanoyl-sn-glycero-3-phosphocholine + H2O = 1-tetradecanoyl-sn-glycerol 3-phosphate + choline + H(+). It catalyses the reaction 1-decanoyl-sn-glycero-3-phosphocholine + H2O = 1-decanoyl-sn-glycero-3-phosphate + choline + H(+). It carries out the reaction 1-octadecanoyl-sn-glycero-3-phosphocholine + H2O = 1-octadecanoyl-sn-glycero-3-phosphate + choline + H(+). The enzyme catalyses 1-hexadecanoyl-sn-glycero-3-phosphocholine + H2O = 1-hexadecanoyl-sn-glycero-3-phosphate + choline + H(+). The catalysed reaction is 1-hexanoyl-sn-glycero-3-phosphocholine + H2O = 1-hexanoyl-sn-glycero-3-phosphate + choline + H(+). It catalyses the reaction 1-(9Z,12Z)-octadecadienoyl-sn-glycero-3-phosphocholine + H2O = 1-(9Z,12Z)-octadecadienoyl-sn-glycero-3-phosphate + choline + H(+). It carries out the reaction sphing-4-enine-phosphocholine + H2O = sphing-4-enine 1-phosphate + choline + H(+). The enzyme catalyses 1-(5Z,8Z,11Z,14Z-eicosatetraenoyl)-sn-glycero-3-phosphocholine + H2O = 1-(5Z,8Z,11Z,14Z-eicosatetraenoyl)-sn-glycero-3-phosphate + choline + H(+). The catalysed reaction is a 2-acyl-sn-glycero-3-phosphocholine + H2O = a 2-acyl-sn-glycerol 3-phosphate + choline + H(+). It catalyses the reaction a 1,2-diacyl-sn-glycero-3-phosphocholine + H2O = a 1,2-diacyl-sn-glycero-3-phosphate + choline + H(+). It carries out the reaction 1,2-dioctanoyl-sn-glycero-3-phosphocholine + H2O = 1,2-dioctanoyl-sn-glycero-3-phosphate + choline + H(+). The enzyme catalyses 1,2-didecanoyl-sn-glycero-3-phosphocholine + H2O = 1,2-didecanoyl-sn-glycero-3-phosphate + choline + H(+). The catalysed reaction is a 1-acyl-sn-glycero-3-phospho-L-serine + H2O = a 1-acyl-sn-glycero-3-phosphate + L-serine + H(+). It catalyses the reaction 1-(9Z-octadecenoyl)-sn-glycero-3-phospho-L-serine + H2O = 1-(9Z-octadecenoyl)-sn-glycero-3-phosphate + L-serine + H(+). It carries out the reaction a 2-acyl-sn-glycero-3-phospho-L-serine + H2O = a 2-acyl-sn-glycerol 3-phosphate + L-serine + H(+). Its activity is regulated as follows. Inhibited by vanadate. Inhibited by micromolar levels of bile salts, such as tauroursodeoxycholate. Not inhibited by taurodeoxycholate. Not inhibited by hydroxysterols, such as 7-hydroxycholesterol, testosterone, dexamethasone and prednisolone. Inhibited by EDTA and EGTA. Its function is as follows. Secreted lysophospholipase D that hydrolyzes lysophospholipids to produce the signaling molecule lysophosphatidic acid (LPA) in extracellular fluids. Its major substrate is lysophosphatidylcholine. Can also act on sphingosylphosphorylcholine producing sphingosine-1-phosphate, a modulator of cell motility. Can hydrolyze, in vitro, bis-pNPP, to some extent pNP-TMP, and barely ATP. Involved in several motility-related processes such as angiogenesis and neurite outgrowth. Acts as an angiogenic factor by stimulating migration of smooth muscle cells and microtubule formation. Stimulates migration of melanoma cells, probably via a pertussis toxin-sensitive G protein. May have a role in induction of parturition. Possible involvement in cell proliferation and adipose tissue development. Required for LPA production in activated platelets, cleaves the sn-1 lysophospholipids to generate sn-1 lysophosphatidic acids containing predominantly 18:2 and 20:4 fatty acids. Shows a preference for the sn-1 to the sn-2 isomer of 1-O-alkyl-sn-glycero-3-phosphocholine (lyso-PAF). The sequence is that of Autotaxin from Rattus norvegicus (Rat).